Here is an 874-residue protein sequence, read N- to C-terminus: Ectonucleotide pyrophosphatase/phosphodiesterase family member 3 (874 aa).

Topologically, residues 1–11 (MQSTLNLSTEE) are cytoplasmic. A helical; Signal-anchor for type II membrane protein membrane pass occupies residues 12-30 (PVKRNTVKKYKIICIVLLI). Residues 31–874 (LLVAVSLALG…TYLPVFETVI (844 aa)) are Extracellular-facing. SMB domains are found at residues 50-93 (EQGS…VQST) and 94-138 (QIWT…GETS). Intrachain disulfides connect Cys-54-Cys-71, Cys-58-Cys-89, Cys-69-Cys-82, Cys-75-Cys-81, Cys-98-Cys-115, Cys-103-Cys-133, Cys-113-Cys-126, Cys-119-Cys-125, Cys-144-Cys-190, and Cys-152-Cys-364. A Cell attachment site motif is present at residues 78 to 80 (RGD). A phosphodiesterase region spans residues 160-544 (PVILFSMDGF…HGSLNHLLKV (385 aa)). Asp-167 lines the Zn(2+) pocket. ATP is bound at residue Lys-204. Thr-205 contributes to the Zn(2+) binding site. Thr-205 (nucleophile) is an active-site residue. Asn-226 serves as a coordination point for ATP. The N-linked (GlcNAc...) asparagine glycan is linked to Asn-236. An ATP-binding site is contributed by Asp-275. The N-linked (GlcNAc...) asparagine glycan is linked to Asn-279. ATP is bound at residue Tyr-289. The N-linked (GlcNAc...) asparagine glycan is linked to Asn-290. Zn(2+) contacts are provided by Asp-325, His-329, Asp-372, and His-373. 6 cysteine pairs are disulfide-bonded: Cys-380–Cys-477, Cys-428–Cys-817, Cys-561–Cys-622, Cys-574–Cys-678, Cys-576–Cys-663, and Cys-786–Cys-796. Asn-425 carries an N-linked (GlcNAc...) asparagine glycan. His-482 provides a ligand contact to Zn(2+). N-linked (GlcNAc...) asparagine glycosylation is present at Asn-532. The nuclease stretch occupies residues 581–874 (TNSDLERVNQ…TYLPVFETVI (294 aa)). Asn-677, Asn-686, and Asn-698 each carry an N-linked (GlcNAc...) asparagine glycan. Ca(2+) contacts are provided by Asp-751, Asp-755, His-757, and Asp-759. Asn-770, Asn-788, and Asn-820 each carry an N-linked (GlcNAc...) asparagine glycan.

It belongs to the nucleotide pyrophosphatase/phosphodiesterase family. As to quaternary structure, monomer and homodimer. Zn(2+) is required as a cofactor. Post-translationally, N-glycosylated. N-glycosylation is necessary for normal transport to the cell membrane, but is not the apical targeting signal.

The protein localises to the cell membrane. It localises to the apical cell membrane. It is found in the secreted. It catalyses the reaction a ribonucleoside 5'-triphosphate + H2O = a ribonucleoside 5'-phosphate + diphosphate + H(+). The enzyme catalyses ATP + H2O = AMP + diphosphate + H(+). It carries out the reaction CTP + H2O = CMP + diphosphate + H(+). The catalysed reaction is GTP + H2O = GMP + diphosphate + H(+). It catalyses the reaction UTP + H2O = UMP + diphosphate + H(+). The enzyme catalyses UDP-N-acetyl-alpha-D-glucosamine + H2O = N-acetyl-alpha-D-glucosamine 1-phosphate + UMP + 2 H(+). It carries out the reaction P(1),P(3)-bis(5'-adenosyl) triphosphate + H2O = AMP + ADP + 2 H(+). The catalysed reaction is P(1),P(4)-bis(5'-adenosyl) tetraphosphate + H2O = AMP + ATP + 2 H(+). It catalyses the reaction P(1),P(5)-bis(5'-adenosyl) pentaphosphate + H2O = adenosine 5'-tetraphosphate + AMP + 2 H(+). The enzyme catalyses P(1),P(4)-bis(5'-guanosyl) tetraphosphate + H2O = GMP + GTP + 2 H(+). It carries out the reaction Hydrolytically removes 5'-nucleotides successively from the 3'-hydroxy termini of 3'-hydroxy-terminated oligonucleotides.. Its function is as follows. Hydrolase that metabolizes extracellular nucleotides, including ATP, GTP, UTP and CTP. Limits mast cells and basophils response during inflammation and during the chronic phases of allergic responses by eliminating extracellular ATP, a signaling molecule activating these cells in an autocrine manner. Metabolizes extracellular ATP in the lumen of the small intestine, and thereby prevents ATP-induced apoptosis of intestinal plasmacytoid dendritic cells. Has a broad specificity and can also hydrolyze UDP-GlcNAc into UMP and GlcNAc-1-phosphate and potentially several other intracellular nucleotide sugars, including UDP-GalNAc, CMP-NeuAc, GDP-Fuc, and UDP-GlcA. Thereby, could modulate glycan biosynthesis and protein glycosylation. Can hydrolyze extracellular dinucleoside polyphosphates, including the vasoactive adenosine polyphosphates as well. In addition, displays an alkaline phosphodiesterase activity in vitro. This chain is Ectonucleotide pyrophosphatase/phosphodiesterase family member 3 (ENPP3), found in Bos taurus (Bovine).